The primary structure comprises 98 residues: Small ribosomal subunit protein uS19c (98 aa).

Belongs to the universal ribosomal protein uS19 family.

The protein resides in the plastid. Its subcellular location is the chloroplast. In terms of biological role, protein S19 forms a complex with S13 that binds strongly to the 16S ribosomal RNA. This is Small ribosomal subunit protein uS19c from Jasminum nudiflorum (Winter jasmine).